Reading from the N-terminus, the 651-residue chain is Acetyl-coenzyme A synthetase (651 aa).

CoA contacts are provided by residues 189–192 (RGGK), threonine 311, and asparagine 335. ATP is bound by residues 387-389 (GEP), 411-416 (DTWWQT), aspartate 500, and arginine 515. Position 523 (serine 523) interacts with CoA. ATP is bound at residue arginine 526. 3 residues coordinate Mg(2+): valine 537, histidine 539, and valine 542. Arginine 584 serves as a coordination point for CoA. Residue lysine 609 is modified to N6-acetyllysine.

This sequence belongs to the ATP-dependent AMP-binding enzyme family. Mg(2+) serves as cofactor. Post-translationally, acetylated. Deacetylation by the SIR2-homolog deacetylase activates the enzyme.

It carries out the reaction acetate + ATP + CoA = acetyl-CoA + AMP + diphosphate. Functionally, catalyzes the conversion of acetate into acetyl-CoA (AcCoA), an essential intermediate at the junction of anabolic and catabolic pathways. AcsA undergoes a two-step reaction. In the first half reaction, AcsA combines acetate with ATP to form acetyl-adenylate (AcAMP) intermediate. In the second half reaction, it can then transfer the acetyl group from AcAMP to the sulfhydryl group of CoA, forming the product AcCoA. This Rhizobium etli (strain ATCC 51251 / DSM 11541 / JCM 21823 / NBRC 15573 / CFN 42) protein is Acetyl-coenzyme A synthetase.